Reading from the N-terminus, the 228-residue chain is MGRRPARCYRQIKNKPYPKSRYCRGVPDPKIRIFDVGAKKRLVDEFPFCVHLVSWEKENVSSEALEAGRIACNKYMVKFAGKDGFHLRVRVHPFHVLRSNKMLSCAGADRLQTGMRGAFGKPQGTCARVAIGQVLLSVRSRDNHSNHAQEALRRAKFKFPGREKIIVNRKWGFTKYTRADYLKWKTENRIVPDGVNPKLLGCRGPLSNRKPGQAFLKPAVVLSSDLVA.

Belongs to the universal ribosomal protein uL16 family. Component of the small ribosomal subunit. Mature ribosomes consist of a small (40S) and a large (60S) subunit. The 40S subunit contains about 33 different proteins and 1 molecule of RNA (18S). The 60S subunit contains about 49 different proteins and 3 molecules of RNA (25S, 5.8S and 5S).

The chain is Large ribosomal subunit protein uL16 (RPL10) from Pinus taeda (Loblolly pine).